We begin with the raw amino-acid sequence, 157 residues long: MGAQARRERLAQLVAPILAEAGLDLEGLDITPVGKRRLVRVVVDSDDGVDLERIGEVSQKISTALDEVDVMGQSPYVLEVTSPGVDRPLTEPRHWRRARGRLVHAPLVAGGQVKGRVIDADETGVTFDVDGQSQVYAFSDLGRGKVQVEFRHDDAAD.

The protein belongs to the RimP family.

The protein resides in the cytoplasm. Functionally, required for maturation of 30S ribosomal subunits. The sequence is that of Ribosome maturation factor RimP from Thermobifida fusca (strain YX).